The following is a 466-amino-acid chain: Ceramide glucosyltransferase 1 (466 aa).

The helical transmembrane segment at 70 to 90 (LALSGCIFVSVLYLVHIIAFF) threads the bilayer. Residue Asp-148 is a short sequence motif, D1. Asp-200 is a short sequence motif (D2). Residue Asp-294 is a short sequence motif, D3. The active-site Proton acceptor is Asp-294. Residues 330–334 (RIGRW) carry the (Q/R)XXRW motif. The next 2 helical transmembrane spans lie at 354 to 374 (CVTS…YSVY) and 403 to 423 (TPFL…FIFI).

The protein belongs to the glycosyltransferase 2 family. Expressed in excretory canals, pharyngeal intestinal valve, intestine and intestinal rectal valve.

The protein resides in the membrane. It carries out the reaction an N-acylsphing-4-enine + UDP-alpha-D-glucose = a beta-D-glucosyl-(1&lt;-&gt;1')-N-acylsphing-4-enine + UDP + H(+). It catalyses the reaction an N-acyl-15-methylhexadecasphing-4-enine + UDP-alpha-D-glucose = an N-acyl-1-beta-D-glucosyl-15-methylhexadecasphing-4-enine + UDP + H(+). The protein operates within lipid metabolism; sphingolipid metabolism. In terms of biological role, catalyzes the first glycosylation step in glycosphingolipid biosynthesis, the transfer of glucose to ceramide to produce glucosylceramides (GlcCer). GlcCer are known to contribute to the physical properties and physiological functions of membranes and may regulate signal transduction. Only branched-chain sphingoid bases like 15-methylhexadecasphing-4-enine are used for generating complex sphingolipids in Caenorhabditis elegans. Together with cgt-3, plays a role in the trafficking of proteins such as mig-14 to the cell membrane in intestinal cells. This chain is Ceramide glucosyltransferase 1, found in Caenorhabditis elegans.